The following is a 152-amino-acid chain: RxLR effector protein Avrblb1 (152 aa).

The signal sequence occupies residues Met1–Ser24. The RxLR-dEER signature appears at Arg51–Arg72. The short motif at Arg54 to Asp56 is the RGD RLK-binding motif element. A glycan (N-linked (GlcNAc...) asparagine) is linked at Asn66. The tract at residues Gln99–Ser152 is w motif.

This sequence belongs to the RxLR effector family. As to quaternary structure, interacts with host defense protein RGA2/Rpi-blb1. Interacts with host legume-type lectin receptor kinase LECRK19.

The protein resides in the secreted. The protein localises to the host nucleus. Its subcellular location is the host nucleolus. It is found in the host cell membrane. Secreted effector that acts as an elicitor of hypersensitive response (HR) specifically on plants carrying defense protein RGA2/Rpi-blb1. Enhances P.infestans colonization of plant hosts Nicotiana benthamiana and potato Solanum bulbocastanum leaves. Associates with host legume-type lectin receptor kinases and disrupts attachments between the host plasma membrane and cell wall. The sequence is that of RxLR effector protein Avrblb1 from Phytophthora infestans (strain T30-4) (Potato late blight agent).